Here is a 138-residue protein sequence, read N- to C-terminus: Salivary protein 15 Iper-3 (138 aa).

An N-terminal signal peptide occupies residues 1-21 (MESFVAMKVVCITVLFVIVAV). N-linked (GlcNAc...) asparagine glycans are attached at residues asparagine 30, asparagine 42, asparagine 68, asparagine 107, and asparagine 127. The segment at 119 to 138 (GPNGQKCANKSQCVGHIPGC) is CD4-binding.

It belongs to the salp15 family. In terms of assembly, interacts with host CD4. Interacts with host DC-SIGN (CD209). Interacts with Borrelia outer surface protein C (OspC). As to expression, expressed in salivary glands.

The protein localises to the secreted. Its function is as follows. Salivary tick protein that downregulates host immune system by binding to both dendritic cells, and CD4(+) T cells. Specifically binds to the CD4 coreceptor on T cells. This interaction prevents the activation of the Src kinase, Lck, and its downstream substrate Zap-70, and results in deficient activation of PLCgamma1, the repression of calcium fluxes triggered by T-cell antigen receptor (TCR) ligation, and a subsequent reduction in interleukin-2 production. This salivary protein also binds to DC-SIGN (CD209) on dendritic cells (DC) and activates the Raf-1 kinase/MEK signaling pathway that results in down-regulating expression of pro-inflammatory cytokines. Furthermore, it inhibits T cell proliferation induced by DCs. It also inhibits in vitro keratinocyte inflammation induced by Borrelia burgdorferi or by the major outer surface protein (OspC) of Borrelia. In addition, it downregulates chemokines and monocyte chemoattractant protein 1, as well as several antimicrobial peptides such as defensins, cathelicidin, psoriasin, and RNase 7. Apart from its immunomodulatory activities, it is also associated with protection of Borrelia spirochetes from antibody-mediated killing through its binding to OspC. In vivo, tests on different immune disease animal models show promising therapeutic results, e.g., in inhibiting HIV infection, experimental autoimmune encephalomyelitis, transplantation rejection, and asthma. This Ixodes persulcatus (Taiga tick) protein is Salivary protein 15 Iper-3.